Consider the following 317-residue polypeptide: Dehydrogenase/reductase SDR family member 12 (317 aa).

NAD(+)-binding residues include Ser-50 and Ile-52. Residue Ser-175 coordinates substrate. The NAD(+) site is built by Tyr-201, Lys-205, and Thr-234. Residue Tyr-201 is the Proton acceptor of the active site.

The protein belongs to the short-chain dehydrogenases/reductases (SDR) family.

Functionally, putative oxidoreductase. The sequence is that of Dehydrogenase/reductase SDR family member 12 (DHRS12) from Bos taurus (Bovine).